Here is a 2057-residue protein sequence, read N- to C-terminus: Fer-1-like protein 5 (2057 aa).

7 C2 domains span residues M1–V99, P152–R265, D308–Y425, D1057–H1188, K1213–Y1346, P1467–G1587, and G1705–S1853. Positions 1502, 1508, 1557, 1558, 1559, 1562, 1565, 1824, 1827, and 1830 each coordinate Ca(2+). Residues L1962–A1982 traverse the membrane as a helical segment.

The protein belongs to the ferlin family. Interacts (via second C2 domain) with EHD1 and EHD2. Ca(2+) serves as cofactor.

The protein localises to the cell membrane. It localises to the membrane. Plays a role in myoblast fusion; probable mediator of endocytic recycling for membrane trafficking events during myotube formation. This Homo sapiens (Human) protein is Fer-1-like protein 5 (FER1L5).